A 237-amino-acid polypeptide reads, in one-letter code: Class B acid phosphatase (237 aa).

The N-terminal stretch at 1-23 (MRKVTLTLSAIALALSLNGAAMA) is a signal peptide. The Nucleophile role is filled by Asp69. 2 residues coordinate Mg(2+): Asp69 and Asp71. Asp71 acts as the Proton donor in catalysis. Substrate contacts are provided by residues 137–138 (TG) and Lys177. Asp192 contributes to the Mg(2+) binding site.

This sequence belongs to the class B bacterial acid phosphatase family. Homotetramer. Requires Mg(2+) as cofactor.

It is found in the periplasm. The catalysed reaction is a phosphate monoester + H2O = an alcohol + phosphate. Dephosphorylates several organic phosphate monoesters. Also has a phosphotransferase activity catalyzing the transfer of low-energy phosphate groups from organic phosphate monoesters to free hydroxyl groups of various organic compounds. This is Class B acid phosphatase from Proteus mirabilis (strain HI4320).